The chain runs to 413 residues: Serine hydroxymethyltransferase (413 aa).

(6S)-5,6,7,8-tetrahydrofolate is bound by residues leucine 118 and 122-124 (GHL). At lysine 228 the chain carries N6-(pyridoxal phosphate)lysine.

It belongs to the SHMT family. In terms of assembly, homodimer. The cofactor is pyridoxal 5'-phosphate.

It is found in the cytoplasm. It carries out the reaction (6R)-5,10-methylene-5,6,7,8-tetrahydrofolate + glycine + H2O = (6S)-5,6,7,8-tetrahydrofolate + L-serine. The protein operates within one-carbon metabolism; tetrahydrofolate interconversion. It participates in amino-acid biosynthesis; glycine biosynthesis; glycine from L-serine: step 1/1. Its function is as follows. Catalyzes the reversible interconversion of serine and glycine with tetrahydrofolate (THF) serving as the one-carbon carrier. This reaction serves as the major source of one-carbon groups required for the biosynthesis of purines, thymidylate, methionine, and other important biomolecules. Also exhibits THF-independent aldolase activity toward beta-hydroxyamino acids, producing glycine and aldehydes, via a retro-aldol mechanism. In Phytoplasma australiense, this protein is Serine hydroxymethyltransferase.